Reading from the N-terminus, the 327-residue chain is DNA-directed RNA polymerase subunit alpha (327 aa).

Residues 1 to 233 form an alpha N-terminal domain (alpha-NTD) region; it reads MVREKVKVST…NLFIPFLHVE (233 aa). Residues 267 to 327 are alpha C-terminal domain (alpha-CTD); it reads LAFQYIFIDQ…KKILDILEKK (61 aa).

The protein belongs to the RNA polymerase alpha chain family. As to quaternary structure, in plastids the minimal PEP RNA polymerase catalytic core is composed of four subunits: alpha, beta, beta', and beta''. When a (nuclear-encoded) sigma factor is associated with the core the holoenzyme is formed, which can initiate transcription.

The protein localises to the plastid. The protein resides in the chloroplast. The catalysed reaction is RNA(n) + a ribonucleoside 5'-triphosphate = RNA(n+1) + diphosphate. Its function is as follows. DNA-dependent RNA polymerase catalyzes the transcription of DNA into RNA using the four ribonucleoside triphosphates as substrates. The polypeptide is DNA-directed RNA polymerase subunit alpha (Nasturtium officinale (Watercress)).